Here is a 277-residue protein sequence, read N- to C-terminus: Cis-2,3-dihydrobiphenyl-2,3-diol dehydrogenase (277 aa).

NAD(+) contacts are provided by residues 9 to 36 and Asp59; that span reads LITG…AVLD. Ser142 contacts substrate. Tyr155 serves as the catalytic Proton acceptor. Lys159 contacts NAD(+).

The protein belongs to the short-chain dehydrogenases/reductases (SDR) family.

It catalyses the reaction (2R,3S)-3-phenylcyclohexa-3,5-diene-1,2-diol + NAD(+) = biphenyl-2,3-diol + NADH + H(+). Its pathway is xenobiotic degradation; biphenyl degradation; 2-hydroxy-2,4-pentadienoate and benzoate from biphenyl: step 2/4. The chain is Cis-2,3-dihydrobiphenyl-2,3-diol dehydrogenase (bphB) from Paraburkholderia xenovorans (strain LB400).